A 257-amino-acid polypeptide reads, in one-letter code: MLALISPAKTLDYETALPTDEFTQPRLLEHSAQLIDVCRKLSASEIASLMSVSEKIATLNADRFRDWKPEFDFSNARQAIYAFKGDVYTGLDAYHLKDKDIDFAQQHLRMLSGLYGLLRPLDLMMPYRLEMGTKLKNTRGHNLYEFWDDIITNRINEDLAAIKSELLVNLASDEYYKSVNEKKIKAEIVKPVFLDQKNGKYKVISFYAKKARGLMARFIIENQLNKAEDIKAFNTEGYYFDADNSSAKELVFKRDEQ.

It belongs to the UPF0246 family.

In Acinetobacter baumannii (strain ACICU), this protein is UPF0246 protein ACICU_02469.